A 289-amino-acid polypeptide reads, in one-letter code: ATP synthase mitochondrial F1 complex assembly factor 2 (289 aa).

Residues 1–40 (MWRRCLRLRDVGRRLLNLPRSGLTASEGLGPKLPTPIRAY) constitute a mitochondrion transit peptide. Residue Lys-133 is modified to N6-succinyllysine.

Belongs to the ATP12 family. In terms of assembly, interacts with ATP5F1B; involved in the assembly of the F1 component of the mitochondrial ATP synthase (ATPase). Interacts with FMC1.

The protein localises to the mitochondrion inner membrane. Plays a role in the assembly of the F1 component of the mitochondrial ATP synthase (ATPase). This Bos taurus (Bovine) protein is ATP synthase mitochondrial F1 complex assembly factor 2 (ATPAF2).